Here is a 295-residue protein sequence, read N- to C-terminus: Protease HtpX homolog (295 aa).

The next 2 helical transmembrane spans lie at 15–35 (LVMAGFVFLAGLIGAAIGYAF) and 39–59 (AQTGIIIAVVVGIVYMFVILG). Residue His-143 coordinates Zn(2+). Glu-144 is an active-site residue. A Zn(2+)-binding site is contributed by His-147. 2 consecutive transmembrane segments (helical) span residues 159-179 (ALALASVISFLANMGMNAMWW) and 195-215 (VIMLLLSVLAIILGPLAASMA). Residue Glu-224 coordinates Zn(2+).

Belongs to the peptidase M48B family. Zn(2+) serves as cofactor.

It is found in the cell membrane. The chain is Protease HtpX homolog from Ligilactobacillus salivarius (strain UCC118) (Lactobacillus salivarius).